The following is a 467-amino-acid chain: Amino-acid permease RocE (467 aa).

The next 12 helical transmembrane spans lie at 21–41 (FMIS…GFTI), 47–67 (LGAV…MLCL), 87–107 (FISP…WAVT), 122–142 (WFPH…MFIL), 162–182 (ILII…LIDL), 207–227 (MLIT…IGVA), 246–266 (VWRT…MIPW), 283–303 (IGIP…LLSV), 336–356 (VPMY…LTKF), 361–381 (TVYM…WITI), 409–429 (YPVL…SLAF), and 435–455 (IALY…HVVI).

It belongs to the amino acid-polyamine-organocation (APC) superfamily. Amino acid transporter (AAT) (TC 2.A.3.1) family.

The protein resides in the cell membrane. Putative transport protein involved in arginine degradative pathway. Probably transports arginine or ornithine. This Bacillus subtilis (strain 168) protein is Amino-acid permease RocE.